The sequence spans 242 residues: 2-C-methyl-D-erythritol 4-phosphate cytidylyltransferase (242 aa).

This sequence belongs to the IspD/TarI cytidylyltransferase family. IspD subfamily.

The enzyme catalyses 2-C-methyl-D-erythritol 4-phosphate + CTP + H(+) = 4-CDP-2-C-methyl-D-erythritol + diphosphate. The protein operates within isoprenoid biosynthesis; isopentenyl diphosphate biosynthesis via DXP pathway; isopentenyl diphosphate from 1-deoxy-D-xylulose 5-phosphate: step 2/6. Functionally, catalyzes the formation of 4-diphosphocytidyl-2-C-methyl-D-erythritol from CTP and 2-C-methyl-D-erythritol 4-phosphate (MEP). In Halorhodospira halophila (strain DSM 244 / SL1) (Ectothiorhodospira halophila (strain DSM 244 / SL1)), this protein is 2-C-methyl-D-erythritol 4-phosphate cytidylyltransferase.